A 431-amino-acid chain; its full sequence is Na(+)-translocating NADH-quinone reductase subunit F (431 aa).

A helical transmembrane segment spans residues 10–30 (IFIASTAFCALGLLLVAIILL). The 2Fe-2S ferredoxin-type domain occupies 41 to 133 (CKLRINNDDS…DMNLEIEERY (93 aa)). [2Fe-2S] cluster-binding residues include C76, C82, C85, and C117. The FAD-binding FR-type domain occupies 136–286 (ASSWEGTVVS…SGPYGESFMK (151 aa)). Residues 289–413 (NRPVIFLIGG…ALHNSSILTL (125 aa)) are catalytic.

The protein belongs to the NqrF family. As to quaternary structure, composed of six subunits; NqrA, NqrB, NqrC, NqrD, NqrE and NqrF. [2Fe-2S] cluster serves as cofactor. Requires FAD as cofactor.

Its subcellular location is the cell inner membrane. It catalyses the reaction a ubiquinone + n Na(+)(in) + NADH + H(+) = a ubiquinol + n Na(+)(out) + NAD(+). Functionally, NQR complex catalyzes the reduction of ubiquinone-1 to ubiquinol by two successive reactions, coupled with the transport of Na(+) ions from the cytoplasm to the periplasm. The first step is catalyzed by NqrF, which accepts electrons from NADH and reduces ubiquinone-1 to ubisemiquinone by a one-electron transfer pathway. The polypeptide is Na(+)-translocating NADH-quinone reductase subunit F (Chlamydia muridarum (strain MoPn / Nigg)).